Here is a 255-residue protein sequence, read N- to C-terminus: Hydroxylmethylpyrimidine kinase (255 aa).

Pyridoxal 5'-phosphate is bound by residues G18, Q43, and N110. Q43 is a 4-amino-5-hydroxymethyl-2-methylpyrimidine binding site. A disulfide bridge links C195 with C207. S208 is a binding site for pyridoxal 5'-phosphate.

Belongs to the ThiD family. In terms of assembly, homodimer. Post-translationally, crystals show a disulfide bond between Cys-195 and Cys-207. This disulfide is possibly an artifact of the purification and crystallization conditions. However, as it is adjacent to the conserved GSGC of the oxyanion hole, this disulfide may help to orient the backbone amides toward the oxanion intermediate.

The enzyme catalyses 4-amino-5-hydroxymethyl-2-methylpyrimidine + ATP = 4-amino-2-methyl-5-(phosphooxymethyl)pyrimidine + ADP + H(+). Its pathway is cofactor biosynthesis; thiamine diphosphate biosynthesis. Inhibited by pyridoxal phosphate at high micromolar concentrations. Functionally, catalyzes the phosphorylation of hydroxymethylpyrimidine (HMP) to hydroxymethylpyrimidine phosphate (HMP-P). Unlike other HMPKs, it cannot catalyze the phosphorylation of HMP-P to generate the diphosphate HMP-PP. Shows no activity with pyridoxal, pyridoxamine or pyridoxine. Does not show phosphatase activity. The sequence is that of Hydroxylmethylpyrimidine kinase from Acinetobacter baumannii (strain IS-123).